The following is a 131-amino-acid chain: Small ribosomal subunit protein uS8 (131 aa).

This sequence belongs to the universal ribosomal protein uS8 family. As to quaternary structure, part of the 30S ribosomal subunit. Contacts proteins S5 and S12.

In terms of biological role, one of the primary rRNA binding proteins, it binds directly to 16S rRNA central domain where it helps coordinate assembly of the platform of the 30S subunit. This Blochmanniella pennsylvanica (strain BPEN) protein is Small ribosomal subunit protein uS8.